The primary structure comprises 405 residues: MQRNGVMECSVCHSKVVAPSPRSVSRAYDKHRSKISSKYRALNFLLVSGDCILVGLQPILVFMSKVDGKFQFSPISVNFLTEVTKVIFAIVMLIIQSRKQKVGEKPLLSLSTFVQAARNNALLAVPALLYAINNYLKFIMQLYFSPATVKMLSNLKVLVIAILLKFIMRRKFSIIQWEALALLLIGISVNQLSSIPDGTKSFGLAVTTIAYIYTLIFVTVPSLASVYNEYALKSQFDTSIYLQNLFLYGYGAIFNFLGILGTVIFQGPESFDILRGHSRATMFLICNNAAQGILSSFFFKYADTILKKYSSTVATIFTGLASAAFLGHTLTVNFLLGISIVFISMHQFFSPLAKVKDDKPAGALEPEDAQNHRSSDSSFVNMTAGAADDASHLTATDERKPLLPI.

Residues 1-43 (MQRNGVMECSVCHSKVVAPSPRSVSRAYDKHRSKISSKYRALN) are Cytoplasmic-facing. The helical transmembrane segment at 44 to 64 (FLLVSGDCILVGLQPILVFMS) threads the bilayer. At 65–74 (KVDGKFQFSP) the chain is on the lumenal side. A helical membrane pass occupies residues 75 to 95 (ISVNFLTEVTKVIFAIVMLII). The Cytoplasmic portion of the chain corresponds to 96–121 (QSRKQKVGEKPLLSLSTFVQAARNNA). Residues 122 to 142 (LLAVPALLYAINNYLKFIMQL) form a helical membrane-spanning segment. Position 143 (Tyr-143) is a topological domain, lumenal. Residues 144-164 (FSPATVKMLSNLKVLVIAILL) traverse the membrane as a helical segment. Topologically, residues 165-171 (KFIMRRK) are cytoplasmic. Residues 172–192 (FSIIQWEALALLLIGISVNQL) traverse the membrane as a helical segment. The Lumenal segment spans residues 193 to 203 (SSIPDGTKSFG). Residues 204–224 (LAVTTIAYIYTLIFVTVPSLA) traverse the membrane as a helical segment. Residues 225 to 244 (SVYNEYALKSQFDTSIYLQN) lie on the Cytoplasmic side of the membrane. A helical transmembrane segment spans residues 245–265 (LFLYGYGAIFNFLGILGTVIF). The Lumenal portion of the chain corresponds to 266 to 281 (QGPESFDILRGHSRAT). The helical transmembrane segment at 282-302 (MFLICNNAAQGILSSFFFKYA) threads the bilayer. Residues 303-322 (DTILKKYSSTVATIFTGLAS) are Cytoplasmic-facing. A helical membrane pass occupies residues 323 to 343 (AAFLGHTLTVNFLLGISIVFI). Residues 344-405 (SMHQFFSPLA…TDERKPLLPI (62 aa)) lie on the Lumenal side of the membrane.

The protein belongs to the nucleotide-sugar transporter family. CMP-Sialate:CMP antiporter (TC 2.A.7.12) subfamily.

The protein resides in the golgi apparatus membrane. Its function is as follows. Sugar transporter involved in the transport of CMP-sialic acid from the cytoplasm into the Golgi. May transport important nucleotide sugars such as CMP-Kdo (2-keto-3-deoxy-D-manno-octulosonic acid) in physiological conditions. The polypeptide is CMP-sialic acid transporter 4 (Oryza sativa subsp. japonica (Rice)).